The primary structure comprises 158 residues: Large ribosomal subunit protein uL11 (158 aa).

Residues 1 to 28 (MAGTIEALVPGGQATPGPPLGPELGPTP) are disordered.

The protein belongs to the universal ribosomal protein uL11 family. Part of the ribosomal stalk of the 50S ribosomal subunit. Interacts with L10 and the large rRNA to form the base of the stalk. L10 forms an elongated spine to which L12 dimers bind in a sequential fashion forming a multimeric L10(L12)X complex.

Functionally, forms part of the ribosomal stalk which helps the ribosome interact with GTP-bound translation factors. In Halorubrum lacusprofundi (strain ATCC 49239 / DSM 5036 / JCM 8891 / ACAM 34), this protein is Large ribosomal subunit protein uL11.